The chain runs to 347 residues: Inosamine-phosphate amidinotransferase 1 (347 aa).

Active-site residues include D179 and H227. C332 serves as the catalytic Amidino-cysteine intermediate.

The protein belongs to the amidinotransferase family. Homodimer.

The catalysed reaction is 1-amino-1-deoxy-scyllo-inositol 4-phosphate + L-arginine = 1-guanidino-1-deoxy-scyllo-inositol 4-phosphate + L-ornithine. Its pathway is antibiotic biosynthesis; streptomycin biosynthesis. Functionally, catalyzes two non-consecutive transamidination reactions. It converts scyllo-inosamine 4-phosphate into N-amidino-scyllo-inosamine 4-phosphate and N1-amidinostreptamine 6-phosphate into streptidine 6-phosphate. This chain is Inosamine-phosphate amidinotransferase 1 (strB1), found in Streptomyces griseus.